The primary structure comprises 91 residues: Non-specific lipid-transfer protein 1 (91 aa).

4 disulfide bridges follow: Cys4-Cys51, Cys14-Cys28, Cys29-Cys74, and Cys49-Cys88.

In terms of tissue distribution, expressed in seeds (at protein level).

Functionally, plant non-specific lipid-transfer proteins transfer phospholipids as well as galactolipids across membranes. May play a role in wax or cutin deposition in the cell walls of expanding epidermal cells and certain secretory tissues. Binds to both saturated and unsaturated lipids, with the highest binding efficiency for linoleic acid, followed by linolenic acid. This is Non-specific lipid-transfer protein 1 from Foeniculum vulgare (Fennel).